A 700-amino-acid chain; its full sequence is Kin of IRRE-like protein 2 (700 aa).

An N-terminal signal peptide occupies residues 1 to 19 (MLASALLVFLCCFKGHAGS). Topologically, residues 20–507 (SPHFLQQPED…GRRDLLPTVR (488 aa)) are extracellular. Ig-like C2-type domains follow at residues 21–115 (PHFL…AQLH), 120–219 (PEAP…VTLS), 224–304 (PMVT…TALE), 309–391 (PILQ…ARLT), and 395–497 (PPVV…QIHL). A disulfide bridge links C42 with C100. N-linked (GlcNAc...) asparagine glycosylation is present at N140. Intrachain disulfides connect C143–C201 and C245–C288. Positions 146–148 (RGD) match the Cell attachment site motif. Residue N298 is glycosylated (N-linked (GlcNAc...) asparagine). 2 cysteine pairs are disulfide-bonded: C330–C372 and C416–C482. A glycan (N-linked (GlcNAc...) asparagine) is linked at N481. The chain crosses the membrane as a helical span at residues 508-528 (IVAGAASAATSLLMVITGVVL). The Cytoplasmic segment spans residues 529–700 (CCWRHGSLSK…PSHQRLQTHV (172 aa)). Residues 542 to 576 (LVRIPGSSEGSSSRGPEEETGSSEDRGPIVHTDHS) form a disordered region. S563 carries the phosphoserine modification. Positions 564–576 (SEDRGPIVHTDHS) are enriched in basic and acidic residues. Residues Y595, Y596, and Y653 each carry the phosphotyrosine modification. The tract at residues 671–700 (FGPPELSSGTPPFPYATLSPPSHQRLQTHV) is disordered. Polar residues predominate over residues 689-700 (SPPSHQRLQTHV).

This sequence belongs to the immunoglobulin superfamily. As to quaternary structure, homodimer. Interacts with NPHS2/podocin (via the C-terminus). Interacts with NPHS1 (via the Ig-like domains). Interacts with FYN. Post-translationally, N-glycosylated. In terms of processing, phosphorylated at Ser-548 or Ser-549; due to site ambiguity, the exact position of the serine phosphorylation could not be determined. Phosphorylation at residues Tyr-631 and/or Tyr-632. FYN mediates tyrosine phosphorylation in pancreatic beta-cells. The extracellular domain is cleaved leading to the generation of a soluble fragment and a membrane-bound C-terminal fragment, which is further cleaved by gamma-secretase. In terms of tissue distribution, highly expressed in beta-cells of the pancreatic islets. Expression is seen in podocytes of kidney glomeruli, and in the cerebellum and hindbrain at 12.5 dpc, in the spinal cord at 10.5 dpc, and in retina and hypothalamus at 13.5 dpc.

Its subcellular location is the cell membrane. In terms of biological role, may regulate basal insulin secretion. This chain is Kin of IRRE-like protein 2 (Kirrel2), found in Mus musculus (Mouse).